The primary structure comprises 313 residues: MASIQLARTTRGGDGVARADGTRQADEAGSGTLYLVPTPIGNPGDITLRAIEVLRRVGVVASEDTRHTYRLFQSLEIDARLVSYHDHNEESRSRQLLGLLREGTDVALVSDAGTPLVNDPGYRLVAAAVEADVPVRPLPGATASVTALIGSGMPNHQFHYVGFLPRKEAARRAALTALRSTPATLIFFEAPHRIVAMLADLAAVLGDRPAALARNLTKDDEEFLRGRLNELTARLRVEQVVRGQFTVVVAGSPEAHADEDRALAARLTETLVRHGAEARLIREVVREVTGLPRNWVYEQVRLATERSGPLGNS.

A disordered region spans residues 1–23 (MASIQLARTTRGGDGVARADGTR).

It belongs to the methyltransferase superfamily. RsmI family.

Its subcellular location is the cytoplasm. It carries out the reaction cytidine(1402) in 16S rRNA + S-adenosyl-L-methionine = 2'-O-methylcytidine(1402) in 16S rRNA + S-adenosyl-L-homocysteine + H(+). Catalyzes the 2'-O-methylation of the ribose of cytidine 1402 (C1402) in 16S rRNA. This is Ribosomal RNA small subunit methyltransferase I from Micromonospora olivasterospora.